The sequence spans 287 residues: 4,4'-diapophytoene synthase (287 aa).

Residues 18-21 (HSKS), Tyr41, and Arg45 each bind (2E,6E)-farnesyl diphosphate. Asp48 and Asp52 together coordinate Mg(2+). Gln165 is a binding site for (2E,6E)-farnesyl diphosphate. Asn168 serves as a coordination point for Mg(2+). Arg171 provides a ligand contact to (2E,6E)-farnesyl diphosphate. Residue Asp172 participates in Mg(2+) binding. A (2E,6E)-farnesyl diphosphate-binding site is contributed by Tyr248.

Belongs to the phytoene/squalene synthase family. CrtM subfamily. Mg(2+) serves as cofactor.

It carries out the reaction 2 (2E,6E)-farnesyl diphosphate = 15-cis-4,4'-diapophytoene + 2 diphosphate. It participates in carotenoid biosynthesis; staphyloxanthin biosynthesis; staphyloxanthin from farnesyl diphosphate: step 1/5. In terms of biological role, involved in the biosynthesis of the yellow-orange carotenoid staphyloxanthin, which plays a role in the virulence via its protective function against oxidative stress. Catalyzes the head-to-head condensation of two molecules of farnesyl diphosphate (FPP) into the colorless C(30) carotenoid 4,4'-diapophytoene (dehydrosqualene). This Staphylococcus aureus (strain NCTC 8325 / PS 47) protein is 4,4'-diapophytoene synthase.